The chain runs to 138 residues: Basic phospholipase A2 chain HDP-1P (138 aa).

An N-terminal signal peptide occupies residues 1-16; sequence MRILWIVAVCLIGVEG. Intrachain disulfides connect C42-C131, C44-C60, C59-C111, C65-C138, C66-C104, C73-C97, and C91-C102. 3 residues coordinate Ca(2+): Y43, G45, and G47. H63 is a catalytic residue. D64 serves as a coordination point for Ca(2+). Residue D105 is part of the active site.

As to quaternary structure, heterodimer; non-covalently linked. The toxic basic protein has phospholipase A2 activity (chain HDP-1P) and the non-toxic acidic protein functions as its inhibitor (chain HPD-1I (AC A4VBF0)). Ca(2+) is required as a cofactor. In terms of tissue distribution, expressed by the venom gland.

It localises to the secreted. It catalyses the reaction a 1,2-diacyl-sn-glycero-3-phosphocholine + H2O = a 1-acyl-sn-glycero-3-phosphocholine + a fatty acid + H(+). With respect to regulation, enzymatic activity and neurotoxicity are inhibited by Triton X-100, which has been determined to be located in the center of the hydrophobic channel of the enzyme. Its function is as follows. Heterodimer: shows the same activities as the monomer, but with a lower potency. In terms of biological role, monomer: snake venom phospholipase A2 (PLA2) that shows presynaptic neurotoxicity, anticoagulant activity and that weakly inhibits ADP-induced platelet aggregation. Inhibits exocytosis in pancreatic beta cells, confirming it can act presynaptically in inhibiting the exocytosis of neurotransmitters in neurons. PLA2 catalyzes the calcium-dependent hydrolysis of the 2-acyl groups in 3-sn-phosphoglycerides. The sequence is that of Basic phospholipase A2 chain HDP-1P from Vipera nikolskii (Nikolsky's adder).